Here is a 450-residue protein sequence, read N- to C-terminus: Ribulose bisphosphate carboxylase large chain (450 aa).

Lys4 is modified (N6,N6,N6-trimethyllysine). Substrate is bound by residues Asn113 and Thr163. The active-site Proton acceptor is the Lys165. Lys167 contacts substrate. Mg(2+) is bound by residues Lys191, Asp193, and Glu194. An N6-carboxylysine modification is found at Lys191. The active-site Proton acceptor is the His284. 3 residues coordinate substrate: Arg285, His317, and Ser369.

Belongs to the RuBisCO large chain family. Type I subfamily. Heterohexadecamer of 8 large chains and 8 small chains; disulfide-linked. The disulfide link is formed within the large subunit homodimers. Mg(2+) is required as a cofactor. In terms of processing, the disulfide bond which can form in the large chain dimeric partners within the hexadecamer appears to be associated with oxidative stress and protein turnover.

Its subcellular location is the plastid. It localises to the chloroplast. It carries out the reaction 2 (2R)-3-phosphoglycerate + 2 H(+) = D-ribulose 1,5-bisphosphate + CO2 + H2O. The enzyme catalyses D-ribulose 1,5-bisphosphate + O2 = 2-phosphoglycolate + (2R)-3-phosphoglycerate + 2 H(+). In terms of biological role, ruBisCO catalyzes two reactions: the carboxylation of D-ribulose 1,5-bisphosphate, the primary event in carbon dioxide fixation, as well as the oxidative fragmentation of the pentose substrate in the photorespiration process. Both reactions occur simultaneously and in competition at the same active site. In Sedum rubrotinctum (Jelly bean plant), this protein is Ribulose bisphosphate carboxylase large chain.